Here is a 428-residue protein sequence, read N- to C-terminus: Enolase (428 aa).

Residue Gln-163 participates in (2R)-2-phosphoglycerate binding. The active-site Proton donor is the Glu-205. Residues Asp-242, Glu-286, and Asp-313 each coordinate Mg(2+). 4 residues coordinate (2R)-2-phosphoglycerate: Lys-338, Arg-367, Ser-368, and Lys-389. Residue Lys-338 is the Proton acceptor of the active site.

The protein belongs to the enolase family. Requires Mg(2+) as cofactor.

It localises to the cytoplasm. Its subcellular location is the secreted. The protein localises to the cell surface. It catalyses the reaction (2R)-2-phosphoglycerate = phosphoenolpyruvate + H2O. The protein operates within carbohydrate degradation; glycolysis; pyruvate from D-glyceraldehyde 3-phosphate: step 4/5. Functionally, catalyzes the reversible conversion of 2-phosphoglycerate (2-PG) into phosphoenolpyruvate (PEP). It is essential for the degradation of carbohydrates via glycolysis. The protein is Enolase of Bordetella bronchiseptica (strain ATCC BAA-588 / NCTC 13252 / RB50) (Alcaligenes bronchisepticus).